Here is a 424-residue protein sequence, read N- to C-terminus: MLDQKLIRENPTFVEDNLSLRGKVYDIARIRELSLERKEIDTEISSLQSESKKLSKIIGQEIRNSNINSKELNELKDKGNKYRIKVSEFEEQKRILDKQLQDEISKLPNLPSKDAPLGENENNNIQIKEWGDPLTKDNLKAHWEIGENLNLFDSVKSTKISKSRFITLTGNGARLERALVNFMLDVHSNNGYLELMPPALVNSESLQGSGQLPKFSNESFKCANDDLWLSPTAEVPLTAFHKNEIIDPKILPLKYVAYSPCFRREAGSYGRDTKGLIRLHQFNKVELYWFCHPNKSLEAHKEITADAESILKKLNLPYRSVDICTGDLGFSSSRTFDLEVWLPSSQCYREISSCSNCLDFQARRSSIRTKIDKKTSYIHTLNGSGLAIGRTMAAILENGQQLDGSVKIPDALVPYFGSSFIKTT.

Residue 232–234 (TAE) participates in L-serine binding. 263–265 (RRE) contacts ATP. An L-serine-binding site is contributed by Glu286. 350–353 (EISS) is an ATP binding site. Ser384 is a binding site for L-serine.

The protein belongs to the class-II aminoacyl-tRNA synthetase family. Type-1 seryl-tRNA synthetase subfamily. As to quaternary structure, homodimer. The tRNA molecule binds across the dimer.

It is found in the cytoplasm. It carries out the reaction tRNA(Ser) + L-serine + ATP = L-seryl-tRNA(Ser) + AMP + diphosphate + H(+). The catalysed reaction is tRNA(Sec) + L-serine + ATP = L-seryl-tRNA(Sec) + AMP + diphosphate + H(+). It functions in the pathway aminoacyl-tRNA biosynthesis; selenocysteinyl-tRNA(Sec) biosynthesis; L-seryl-tRNA(Sec) from L-serine and tRNA(Sec): step 1/1. Catalyzes the attachment of serine to tRNA(Ser). Is also able to aminoacylate tRNA(Sec) with serine, to form the misacylated tRNA L-seryl-tRNA(Sec), which will be further converted into selenocysteinyl-tRNA(Sec). The polypeptide is Serine--tRNA ligase (Prochlorococcus marinus subsp. pastoris (strain CCMP1986 / NIES-2087 / MED4)).